We begin with the raw amino-acid sequence, 501 residues long: MNHAGMLALVKKRKRPVEAGAQGQVEVKFKEVTLELVERKMGSSRRNFLTRLARSKGFRVEDVLSDDVTHVVAEDNQAEVLWAWLMGHGLRDVSRLALLDISWFTDSMREGRPVRVETRHSIQNTPTGTDCSPPTAVANVSQYACQRRTTTENHNNKIFTDVMEELAESSEFNESKGPCLAFRQAASVLKSLPSAVHCLKAIQGLPCLGEHTKAVMEEILTFGRSFKVEEIRCDERYQALKLFTSVFGVGPKTAEKWYRRGLRSLQEILTEPNIQLNRMQRAGFLYYSDISKAVSKAEAKAVGCIIEDTFHWIAPDAILALTGGFRRGKEYGHDVDFLLTMPEIGKDEGLLLHVIDRLKDQGILLYCDYQGSTFDVSKLPSCRFEDMDCFQKCFLILRLEQGQVEGERGLQRDPGDSRGWRAVRVDLVAPPVDRYAFALLGWTGSRFGRDLRTFAQKERQMLLDNHALYDKTKKLCLLATTEEDIFTHLGLEYVEPWQRNA.

The Nuclear localization signal signature appears at 11–17 (KKRKRPV). The region spanning 24-121 (QVEVKFKEVT…RPVRVETRHS (98 aa)) is the BRCT domain. The involved in DNA binding stretch occupies residues 249-253 (VGPKT). A 2'-deoxyribonucleoside 5'-triphosphate contacts are provided by residues 324 to 329 (GFRRGK) and 333 to 336 (HDVD). Mg(2+) contacts are provided by D334, D336, and D426. 441-442 (GW) serves as a coordination point for a 2'-deoxyribonucleoside 5'-triphosphate.

This sequence belongs to the DNA polymerase type-X family. Requires Mg(2+) as cofactor.

It is found in the nucleus. It carries out the reaction DNA(n) + a 2'-deoxyribonucleoside 5'-triphosphate = DNA(n+1) + diphosphate. In terms of biological role, template-independent DNA polymerase which catalyzes the random addition of deoxynucleoside 5'-triphosphate to the 3'-end of a DNA initiator. One of the in vivo functions of this enzyme is the addition of nucleotides at the junction (N region) of rearranged Ig heavy chain and T-cell receptor gene segments during the maturation of B- and T-cells. This is DNA nucleotidylexotransferase (dntt) from Oncorhynchus mykiss (Rainbow trout).